The following is a 443-amino-acid chain: Protein AknT (443 aa).

Belongs to the cytochrome P450 family.

Involved in the biosynthesis of the anthracycline antitumor agent aclacinomycin A. AknT is required for the glycosylation of aklavinone aglycone by AknS to yield aclacinomycin T (rhodosaminyl-aklavinone). This Streptomyces galilaeus protein is Protein AknT.